The primary structure comprises 331 residues: Cytosolic sulfotransferase 8 (331 aa).

Positions 1–11 are enriched in basic and acidic residues; sequence MGEKDIPRNLK. A disordered region spans residues 1 to 31; sequence MGEKDIPRNLKEEEEEEEENQSEETKSLISS. Residues 12–22 show a composition bias toward acidic residues; that stretch reads EEEEEEEENQS. Position 80–85 (80–85) interacts with 3'-phosphoadenylyl sulfate; that stretch reads KSGTTW. His145 functions as the Proton acceptor in the catalytic mechanism. Residues Arg167, Ser175, Tyr231, and 297–299 each bind 3'-phosphoadenylyl sulfate; that span reads RKG.

Belongs to the sulfotransferase 1 family. As to expression, expressed in seedlings and roots.

The protein resides in the cytoplasm. Sulfotransferase that utilizes 3'-phospho-5'-adenylyl sulfate (PAPS) as sulfonate donor. No activity with brassinosteroids. This Arabidopsis thaliana (Mouse-ear cress) protein is Cytosolic sulfotransferase 8 (SOT8).